A 295-amino-acid chain; its full sequence is MVFLSGNASDSSNCTHPPAPVNISKAILLGVILGGLIIFGVLGNILVILSVACHRHLHSVTHYYIVNLAVADLLLTSTVLPFSAIFEILGYWAFGRVFCNIWAAVDVLCCTASIMGLCIISIDRYIGVSYPLRYPTIVTQKRGLMALLCVWALSLVISIGPLFGWRQPAPEDETICQITEEPGYVLFSALGSFYVPLTIILVMYCRVYVVAKRESRGLKSGLKTDKSDSEQVTLRIHRKNAPVGGTGVSSAKNKTHFSVRLLKFSREKKAAKTLGIVVGCFVLCWLPFFLVMPIG.

At 1–27 (MVFLSGNASDSSNCTHPPAPVNISKAI) the chain is on the extracellular side. N-linked (GlcNAc...) asparagine glycosylation is found at Asn7, Asn13, and Asn22. A helical membrane pass occupies residues 28–51 (LLGVILGGLIIFGVLGNILVILSV). Topologically, residues 52-64 (ACHRHLHSVTHYY) are cytoplasmic. Residues 65–88 (IVNLAVADLLLTSTVLPFSAIFEI) traverse the membrane as a helical segment. The Extracellular portion of the chain corresponds to 89–99 (LGYWAFGRVFC). Residues Cys99 and Cys176 are joined by a disulfide bond. A helical membrane pass occupies residues 100 to 122 (NIWAAVDVLCCTASIMGLCIISI). Residues 123-143 (DRYIGVSYPLRYPTIVTQKRG) lie on the Cytoplasmic side of the membrane. The chain crosses the membrane as a helical span at residues 144–167 (LMALLCVWALSLVISIGPLFGWRQ). Over 168–181 (PAPEDETICQITEE) the chain is Extracellular. A helical transmembrane segment spans residues 182–205 (PGYVLFSALGSFYVPLTIILVMYC). At 206 to 273 (RVYVVAKRES…FSREKKAAKT (68 aa)) the chain is on the cytoplasmic side. Ser215 carries the phosphoserine; by PKA modification. The chain crosses the membrane as a helical span at residues 274–295 (LGIVVGCFVLCWLPFFLVMPIG).

Belongs to the G-protein coupled receptor 1 family. Adrenergic receptor subfamily. ADRA1A sub-subfamily. Homo- and heterooligomer. Heterooligomerizes with ADRA1B homooligomers in cardiac myocytes. Interacts with CAVIN4.

The protein resides in the nucleus membrane. Its subcellular location is the cell membrane. It is found in the cytoplasm. It localises to the membrane. The protein localises to the caveola. Functionally, this alpha-adrenergic receptor mediates its action by association with G proteins that activate a phosphatidylinositol-calcium second messenger system. Its effect is mediated by G(q) and G(11) proteins. Nuclear ADRA1A-ADRA1B heterooligomers regulate phenylephrine (PE)-stimulated ERK signaling in cardiac myocytes. The sequence is that of Alpha-1A adrenergic receptor (ADRA1A) from Canis lupus familiaris (Dog).